The chain runs to 432 residues: T-box transcription factor T (432 aa).

The segment at residues 49-217 is a DNA-binding region (T-box); sequence LWTRFKELTN…HNPFAKAFLD (169 aa). The tract at residues 274 to 306 is disordered; it reads CERYSSLRNHRSAPYPSPYTHRNNSPNNLADNS. Over residues 293–306 the composition is skewed to polar residues; that stretch reads THRNNSPNNLADNS.

In terms of assembly, when not bound to DNA, exists as a monomer. Binds DNA as a dimer. Expressed in presumptive mesodermal cells around the blastopore, and then in the notochord.

The protein resides in the nucleus. Its function is as follows. Involved in the transcriptional regulation of genes required for mesoderm formation and differentiation. Binds to the palindromic T site 5'-TTCACACCTAGGTGTGAA-3' DNA sequence. Causes dorsal mesodermal differentiation of animal cap ectoderm when co-expressed with wnt8 and noggin. None of these molecules causes dorsal mesoderm formation when expressed alone. Establishes the left/right axis at early gastrula stage by directly up-regulating mesodermal expression of zic3. The polypeptide is T-box transcription factor T (Xenopus laevis (African clawed frog)).